Reading from the N-terminus, the 280-residue chain is MDLRVRTLLGGDRLRILLMFFHVMVQTVAEQEVENLSGLSTNPEKDIFVVRENGTTCLMAEFAAKFIVPYDVWASNYVDLITEQAEISLTRGAEVKGHCGHNESELEVFWVDHAYTLRMLFVKESHNTSKGPEATWNLNKVHFVYDSSEKTHFKAPVKVNKYIASSHHLSALVTPAGMSYECQAQQTISLASSDPQKTVTMILSAVHIQPFDIISDFVFSEEHKCPVDEQEQLEETLPLILGLILGLVIVITLVIYHIHHKMTANQVQIPRDRSQYKHMG.

A signal peptide spans 1–29 (MDLRVRTLLGGDRLRILLMFFHVMVQTVA). Residues 30 to 235 (EQEVENLSGL…PVDEQEQLEE (206 aa)) lie on the Extracellular side of the membrane. N-linked (GlcNAc...) asparagine glycans are attached at residues N35, N53, N102, and N127. The chain crosses the membrane as a helical span at residues 236-256 (TLPLILGLILGLVIVITLVIY). Residues 257–280 (HIHHKMTANQVQIPRDRSQYKHMG) lie on the Cytoplasmic side of the membrane.

This sequence belongs to the LAMP family. Glycosylated. In terms of tissue distribution, in brain, strongly expressed in the globus pallidus/ventral pallidum complex, the substantia nigra pars reticulata and the entopeduncular nucleus (at protein level). Expressed in the external plexiform layer of the olfactory bulb (at protein level). May be weakly expressed in neocortex and striatum (at protein level). Highly expressed in brain; not detected in other tissues tested. Detected in the cingulate cortex, cortical plate and caudate putamen. In neocortex, specifically expressed in neurons of layers II/III and V.

It is found in the cytoplasmic vesicle membrane. The protein resides in the cell membrane. It localises to the cell projection. The protein localises to the dendrite. Its subcellular location is the cytoplasmic vesicle. It is found in the secretory vesicle. The protein resides in the synaptic vesicle membrane. It localises to the growth cone membrane. The protein localises to the early endosome membrane. Its subcellular location is the recycling endosome. It is found in the endoplasmic reticulum-Golgi intermediate compartment membrane. The protein resides in the endosome membrane. In terms of biological role, plays a role in short-term synaptic plasticity in a subset of GABAergic neurons in the brain. This Mus musculus (Mouse) protein is Lysosome-associated membrane glycoprotein 5 (Lamp5).